Reading from the N-terminus, the 134-residue chain is Putative thioredoxin 2 (134 aa).

The Thioredoxin domain maps to 3 to 106 (STVELTKENF…LTDVIGQARK (104 aa)). C31 and C34 are oxidised to a cystine. The segment at 115 to 134 (AVAEQQAQAGQNGQEGQEGQ) is disordered. The segment covering 117–134 (AEQQAQAGQNGQEGQEGQ) has biased composition (low complexity).

This sequence belongs to the thioredoxin family.

It is found in the cytoplasm. Functionally, component of the thioredoxin-thioredoxin reductase system. Participates in various redox reactions through the reversible oxidation of its active center dithiol to a disulfide and catalyzes dithiol-disulfide exchange reactions. This is Putative thioredoxin 2 (trxC) from Streptomyces coelicolor (strain ATCC BAA-471 / A3(2) / M145).